The chain runs to 445 residues: METSKSSTMQVSFVCQRCSQPLKLDTSFKILDKVTMQELTAPLVTTAAVKPGDIQEVDSNIEETFAENRTDGVSRRLIPPARMMSTESATSFTLIGEASDGGTMENLSRRLKVTGDLFDIMSGQTDVDHPLCEECTDTLLDQLDTQLNITENECQNYKRCLEILERMNEDDKEKLEAKLKELAEDEDRLIQELEEVERNRELVAKDIEKVREEAERLEQEEARYQKEYSEFKRQQLELDDDLKSVENQMRYAQIQLDKLKKTNVFNATFHIWHSGQFGTINNFRLGRLPSVPVEWNEINAAWGQTVLLLHALANKMGLQFQRYRLMPFGNHSYLESLTDKSKELPLYCSGGLRFFWDNKFDHAMVAFLDCVQQFKEEVEKGDTGFCLPYRMDVEKGKIEDTGGSGGSYSIKTQFNSEEQWTKALKFMLTNLKWGLAWVSSQFYNK.

A BH3 motif is present at residues Thr-103–Ser-122. Residues Asp-137–Val-264 adopt a coiled-coil conformation. Residues Asp-240–Lys-445 form an evolutionary conserved domain (ECD) region. The tract at residues Trp-420 to Lys-445 is required for membrane-association.

It belongs to the beclin family. Component of the PI3K (PI3KC3/PI3K-III/class III phosphatidylinositol 3-kinase) complex. Post-translationally, may be proteolytically processed by caspases; the C-terminal fragment(s) may induce apoptosis.

The protein localises to the cytoplasm. It is found in the golgi apparatus. Its subcellular location is the trans-Golgi network membrane. It localises to the endosome membrane. The protein resides in the endoplasmic reticulum membrane. The protein localises to the mitochondrion membrane. It is found in the cytoplasmic vesicle. Its subcellular location is the autophagosome. Its function is as follows. Plays a central role in autophagy. Acts as core subunit of different PI3K complex forms that mediate formation of phosphatidylinositol 3-phosphate and are believed to play a role in multiple membrane trafficking pathways: PI3KC3-C1 is involved in initiation of autophagosomes and PI3KC3-C2 in maturation of autophagosomes and endocytosis. Involved in regulation of degradative endocytic trafficking and required for the abscission step in cytokinesis, probably in the context of PI3KC3-C2. Essential for the formation of PI3KC3-C2 but not PI3KC3-C1 PI3K complex forms. Involved in endocytosis including endosome formation in neuronal cells. The polypeptide is Beclin-1 (becn1) (Xenopus tropicalis (Western clawed frog)).